A 712-amino-acid chain; its full sequence is Cadherin-13 (712 aa).

Residues 1–22 (MQHKTQLTLSFLLSQVLLLACA) form the signal peptide. The propeptide occupies 23–138 (EDLECTPGFQ…GNLGIPRQKR (116 aa)). A glycan (N-linked (GlcNAc...) asparagine) is linked at N86. 5 consecutive Cadherin domains span residues 143–245 (TPIL…RPMF), 246–363 (KEGP…PPEF), 364–477 (TKKE…GPVF), 478–585 (HPNP…VPSL), and 586–680 (YPTL…LQVC). Residues N382, N500, N530, N638, and N671 are each glycosylated (N-linked (GlcNAc...) asparagine). D693 carries the GPI-anchor amidated aspartate lipid modification. Positions 694-712 (ALHISMTLILLSLFSLFCL) are cleaved as a propeptide — removed in mature form.

By contrast to classical cadherins, homodimerization in trans is not mediated by cadherin EC1 domain strand-swapping, but instead through a homophilic adhesive interface which joins two elongated EC1-EC2 domains through a region near their Ca2+-binding sites to form a tetrahedral, X-like shape. As to expression, neural tissues. Also found in muscles; kidney and retina.

The protein resides in the cell membrane. It is found in the cytoplasm. Cadherins are calcium-dependent cell adhesion proteins. They preferentially interact with themselves in a homophilic manner in connecting cells; cadherins may thus contribute to the sorting of heterogeneous cell types. May act as a negative regulator of neural cell growth. The sequence is that of Cadherin-13 (CDH13) from Gallus gallus (Chicken).